A 456-amino-acid chain; its full sequence is tRNA modification GTPase MnmE (456 aa).

(6S)-5-formyl-5,6,7,8-tetrahydrofolate is bound by residues Arg24, Glu81, and Lys120. The TrmE-type G domain occupies 216-379 (GMTVVIAGRP…LRDHLKACMG (164 aa)). Asn226 contacts K(+). Residues 226 to 231 (NAGKSS), 245 to 251 (TDIAGTT), 270 to 273 (DTAG), 335 to 338 (NKAD), and 359 to 361 (SAR) contribute to the GTP site. A Mg(2+)-binding site is contributed by Ser230. Positions 245, 247, and 250 each coordinate K(+). Residue Thr251 coordinates Mg(2+). A (6S)-5-formyl-5,6,7,8-tetrahydrofolate-binding site is contributed by Lys456.

It belongs to the TRAFAC class TrmE-Era-EngA-EngB-Septin-like GTPase superfamily. TrmE GTPase family. In terms of assembly, homodimer. Heterotetramer of two MnmE and two MnmG subunits. The cofactor is K(+).

Its subcellular location is the cytoplasm. Exhibits a very high intrinsic GTPase hydrolysis rate. Involved in the addition of a carboxymethylaminomethyl (cmnm) group at the wobble position (U34) of certain tRNAs, forming tRNA-cmnm(5)s(2)U34. The protein is tRNA modification GTPase MnmE of Pseudomonas entomophila (strain L48).